A 452-amino-acid chain; its full sequence is Coproporphyrinogen III oxidase, anaerobic 1 (452 aa).

The region spanning 45-278 is the Radical SAM core domain; it reads LDPAVPISVY…ANLAARLFTE (234 aa). Y54 contributes to the S-adenosyl-L-methionine binding site. Residues C60 and C64 each coordinate [4Fe-4S] cluster. F66 is an S-adenosyl-L-methionine binding site. C67 contacts [4Fe-4S] cluster. Residues G111, 112 to 113, E144, Q171, R183, and D208 each bind S-adenosyl-L-methionine; that span reads GT.

Belongs to the anaerobic coproporphyrinogen-III oxidase family. In terms of assembly, monomer. It depends on [4Fe-4S] cluster as a cofactor.

Its subcellular location is the cytoplasm. It carries out the reaction coproporphyrinogen III + 2 S-adenosyl-L-methionine = protoporphyrinogen IX + 2 5'-deoxyadenosine + 2 L-methionine + 2 CO2. Its pathway is porphyrin-containing compound metabolism; protoporphyrin-IX biosynthesis; protoporphyrinogen-IX from coproporphyrinogen-III (AdoMet route): step 1/1. Functionally, anaerobic transformation of coproporphyrinogen III into protoporphyrinogen IX. Dedicated to bacteriochlorophyll biosynthesis. The polypeptide is Coproporphyrinogen III oxidase, anaerobic 1 (hemN) (Cereibacter sphaeroides (strain ATCC 17023 / DSM 158 / JCM 6121 / CCUG 31486 / LMG 2827 / NBRC 12203 / NCIMB 8253 / ATH 2.4.1.) (Rhodobacter sphaeroides)).